A 455-amino-acid chain; its full sequence is Bifunctional protein GlmU (455 aa).

The pyrophosphorylase stretch occupies residues 1–227 (MGLSVIILAA…CEEVQGVNDR (227 aa)). UDP-N-acetyl-alpha-D-glucosamine contacts are provided by residues 8–11 (LAAG), Lys-22, Gln-73, 78–79 (GT), 100–102 (YGD), Gly-137, Glu-152, Asn-167, and Asn-225. Residue Asp-102 participates in Mg(2+) binding. Asn-225 is a Mg(2+) binding site. Residues 228–248 (WELTKLERYYQRLMAKKLSLA) are linker. The tract at residues 249–455 (GVTIIDPERF…KGWHRPTKKE (207 aa)) is N-acetyltransferase. Residues Arg-332 and Lys-350 each coordinate UDP-N-acetyl-alpha-D-glucosamine. Catalysis depends on His-362, which acts as the Proton acceptor. UDP-N-acetyl-alpha-D-glucosamine-binding residues include Tyr-365 and Asn-376. Residues Ala-379, 385-386 (NY), Ser-404, Ala-422, and Arg-439 contribute to the acetyl-CoA site.

It in the N-terminal section; belongs to the N-acetylglucosamine-1-phosphate uridyltransferase family. In the C-terminal section; belongs to the transferase hexapeptide repeat family. As to quaternary structure, homotrimer. It depends on Mg(2+) as a cofactor.

The protein localises to the cytoplasm. It carries out the reaction alpha-D-glucosamine 1-phosphate + acetyl-CoA = N-acetyl-alpha-D-glucosamine 1-phosphate + CoA + H(+). The enzyme catalyses N-acetyl-alpha-D-glucosamine 1-phosphate + UTP + H(+) = UDP-N-acetyl-alpha-D-glucosamine + diphosphate. It functions in the pathway nucleotide-sugar biosynthesis; UDP-N-acetyl-alpha-D-glucosamine biosynthesis; N-acetyl-alpha-D-glucosamine 1-phosphate from alpha-D-glucosamine 6-phosphate (route II): step 2/2. It participates in nucleotide-sugar biosynthesis; UDP-N-acetyl-alpha-D-glucosamine biosynthesis; UDP-N-acetyl-alpha-D-glucosamine from N-acetyl-alpha-D-glucosamine 1-phosphate: step 1/1. The protein operates within bacterial outer membrane biogenesis; LPS lipid A biosynthesis. Its function is as follows. Catalyzes the last two sequential reactions in the de novo biosynthetic pathway for UDP-N-acetylglucosamine (UDP-GlcNAc). The C-terminal domain catalyzes the transfer of acetyl group from acetyl coenzyme A to glucosamine-1-phosphate (GlcN-1-P) to produce N-acetylglucosamine-1-phosphate (GlcNAc-1-P), which is converted into UDP-GlcNAc by the transfer of uridine 5-monophosphate (from uridine 5-triphosphate), a reaction catalyzed by the N-terminal domain. The protein is Bifunctional protein GlmU of Coxiella burnetii (strain CbuK_Q154) (Coxiella burnetii (strain Q154)).